Here is a 159-residue protein sequence, read N- to C-terminus: 8-oxo-dGTP diphosphatase (159 aa).

The region spanning Met-1 to Asp-133 is the Nudix hydrolase domain. Gly-38, Glu-53, Glu-56, and Glu-57 together coordinate Mg(2+). The Nudix box motif lies at Gly-38–His-59.

Belongs to the Nudix hydrolase family. Homotrimer. The cofactor is Mg(2+).

The catalysed reaction is 8-oxo-dGTP + H2O = 8-oxo-dGMP + diphosphate + H(+). Functionally, involved in the DNA repair system to avoid A.T to G.C transversions. Degrades 8-oxo-dGTP to the monophosphate, but is also active on all of the nucleoside triphosphates. The sequence is that of 8-oxo-dGTP diphosphatase (mutX) from Streptococcus mutans serotype c (strain ATCC 700610 / UA159).